Consider the following 173-residue polypeptide: Lipoprotein signal peptidase (173 aa).

Transmembrane regions (helical) follow at residues 67–87 (WISL…PHLG) and 92–112 (MGFG…FAFG). Catalysis depends on residues aspartate 116 and aspartate 132. The chain crosses the membrane as a helical span at residues 125-145 (FPVFNGADIAINLGLACLLIG). The segment at 151–173 (SRTPAPARPASKQIREPTDTTGG) is disordered. The span at 163 to 173 (QIREPTDTTGG) shows a compositional bias: basic and acidic residues.

It belongs to the peptidase A8 family.

It is found in the cell inner membrane. It catalyses the reaction Release of signal peptides from bacterial membrane prolipoproteins. Hydrolyzes -Xaa-Yaa-Zaa-|-(S,diacylglyceryl)Cys-, in which Xaa is hydrophobic (preferably Leu), and Yaa (Ala or Ser) and Zaa (Gly or Ala) have small, neutral side chains.. The protein operates within protein modification; lipoprotein biosynthesis (signal peptide cleavage). Functionally, this protein specifically catalyzes the removal of signal peptides from prolipoproteins. In Gloeobacter violaceus (strain ATCC 29082 / PCC 7421), this protein is Lipoprotein signal peptidase.